We begin with the raw amino-acid sequence, 629 residues long: Protein EDS1B (629 aa).

Serine 123 (nucleophile) is an active-site residue. Active-site charge relay system residues include aspartate 187 and histidine 317.

As to quaternary structure, interacts (via N-terminus) with PAD4 and SAG101. Part of a nuclear complex made of EDS1, PAD4 and SAG101, that can be redirected to the cytoplasm in the presence of an extranuclear form of EDS1. Does not interact with itself or with EDS1.

Its subcellular location is the nucleus. The protein resides in the cytoplasm. Functionally, acts as a second functional copy of EDS1. Can mediate HRT-mediated resistance to turnip crinkle virus. The chain is Protein EDS1B (EDS1B) from Arabidopsis thaliana (Mouse-ear cress).